Here is an 868-residue protein sequence, read N- to C-terminus: Pentatricopeptide repeat-containing protein At2g27610 (868 aa).

PPR repeat units lie at residues 57-91, 92-126, 127-157, 158-192, 193-227, 228-258, 259-293, 294-328, 329-359, 361-395, 396-426, 427-457, 458-492, 493-528, 529-559, 560-594, 595-625, and 631-661; these read DRES…GMEM, DCSI…GFLD, DVSV…MKER, NVVT…GTQP, NSFT…GLDK, TIPV…TEVK, SVVT…YVRL, SESS…GFLF, DQNI…IGCV, NVVS…GVRP, NEFT…NYER, SSTV…IDDK, DIVA…GIKP, NEFT…RLDS, SLCV…QREK, DLVS…KVKM, DGVT…MVRD, and TKEH…MPNP. Residues 666–741 are type E motif; that stretch reads IWRTILAACR…EPGYSWIEVK (76 aa). The interval 742–772 is type E(+) motif; the sequence is NKTYSFLAGDRSHPLKDQIYMKLEDLSTRLK. The segment at 773 to 868 is type DYW motif; the sequence is DLGYEPDTSY…DGVCSCGDFW (96 aa).

It belongs to the PPR family. PCMP-H subfamily.

The chain is Pentatricopeptide repeat-containing protein At2g27610 (PCMP-H60) from Arabidopsis thaliana (Mouse-ear cress).